Consider the following 340-residue polypeptide: Methionine import ATP-binding protein MetN 2 (340 aa).

The 240-residue stretch at 2–241 (ITLQNVVKEY…PQEKVTQRFV (240 aa)) folds into the ABC transporter domain. 38-45 (GYSGAGKS) serves as a coordination point for ATP.

Belongs to the ABC transporter superfamily. Methionine importer (TC 3.A.1.24) family. The complex is composed of two ATP-binding proteins (MetN), two transmembrane proteins (MetI) and a solute-binding protein (MetQ).

The protein localises to the cell membrane. The catalysed reaction is L-methionine(out) + ATP + H2O = L-methionine(in) + ADP + phosphate + H(+). It carries out the reaction D-methionine(out) + ATP + H2O = D-methionine(in) + ADP + phosphate + H(+). In terms of biological role, part of the ABC transporter complex MetNIQ involved in methionine import. Responsible for energy coupling to the transport system. This chain is Methionine import ATP-binding protein MetN 2, found in Listeria monocytogenes serovar 1/2a (strain ATCC BAA-679 / EGD-e).